The chain runs to 159 residues: MSLEGVFKEGFVTTSYDSVVNWAKTGSLWPMTFGLACCAVEMMHAGAARYDIDRFGMLFRPSPRQSDLMIVAGTLCNKMGPALRKVYDQMAEPRWVISMGSCANGGGYYHYSYSVVRGCDRIVPVDVYVPGCPPTAEALLYGIIQLQQKIRRTNTIARA.

Residues Cys-37, Cys-38, Cys-102, and Cys-132 each contribute to the [4Fe-4S] cluster site.

This sequence belongs to the complex I 20 kDa subunit family. In terms of assembly, NDH-1 is composed of 14 different subunits. Subunits NuoB, C, D, E, F, and G constitute the peripheral sector of the complex. [4Fe-4S] cluster serves as cofactor.

It localises to the cell inner membrane. It catalyses the reaction a quinone + NADH + 5 H(+)(in) = a quinol + NAD(+) + 4 H(+)(out). NDH-1 shuttles electrons from NADH, via FMN and iron-sulfur (Fe-S) centers, to quinones in the respiratory chain. Couples the redox reaction to proton translocation (for every two electrons transferred, four hydrogen ions are translocated across the cytoplasmic membrane), and thus conserves the redox energy in a proton gradient. The polypeptide is NADH-quinone oxidoreductase subunit B (Polaromonas naphthalenivorans (strain CJ2)).